Consider the following 475-residue polypeptide: 1,3-beta-glucanosyltransferase gel2 (475 aa).

A signal peptide spans 1–21; it reads MLPTYVRLFTAVCALATTASA. A disulfide bridge connects residues Cys-69 and Cys-98. The (1,3-beta-D-glucosyl)n site is built by Tyr-87, Asn-159, Glu-160, and Asp-201. Catalysis depends on Glu-160, which acts as the Proton donor. Intrachain disulfides connect Cys-215–Cys-350 and Cys-234–Cys-265. Residue Asn-236 is glycosylated (N-linked (GlcNAc...) asparagine). Residue Glu-262 is the Nucleophile of the active site. Residue Tyr-294 coordinates (1,3-beta-D-glucosyl)n. 3 N-linked (GlcNAc...) asparagine glycosylation sites follow: Asn-311, Asn-339, and Asn-357. Positions 420-451 are disordered; it reads GESNTPGAHSSGSTSGSSSSGGSSSSSSDKES. A compositionally biased stretch (low complexity) spans 429 to 446; sequence SSGSTSGSSSSGGSSSSS. Ser-451 carries GPI-like-anchor amidated serine lipidation. Residues 452 to 475 constitute a propeptide, removed in mature form; it reads AAGTISVPFVGLLSAASFMAFFML.

It belongs to the glycosyl hydrolase 72 family. Post-translationally, the GPI-like anchor contains a phosphoceramide lipid group.

It is found in the cell membrane. Its function is as follows. Splits internally a 1,3-beta-glucan molecule and transfers the newly generated reducing end (the donor) to the non-reducing end of another 1,3-beta-glucan molecule (the acceptor) forming a 1,3-beta linkage, resulting in the elongation of 1,3-beta-glucan chains in the cell wall. Involved in cell wall morphogenesis. In Aspergillus fumigatus (strain CBS 144.89 / FGSC A1163 / CEA10) (Neosartorya fumigata), this protein is 1,3-beta-glucanosyltransferase gel2 (gel2).